We begin with the raw amino-acid sequence, 274 residues long: Adenosylcobinamide-GDP ribazoletransferase (274 aa).

7 helical membrane-spanning segments follow: residues 46–66, 69–89, 117–137, 151–173, 192–212, 216–236, and 253–273; these read VMAS…AIAF, TSLG…WELF, IIAD…SILI, WWMV…HSRL, HTII…PLAM, ELIT…LVEI, and FIMH…VGIV.

The protein belongs to the CobS family. Requires Mg(2+) as cofactor.

It localises to the cell membrane. It catalyses the reaction alpha-ribazole + adenosylcob(III)inamide-GDP = adenosylcob(III)alamin + GMP + H(+). The enzyme catalyses alpha-ribazole 5'-phosphate + adenosylcob(III)inamide-GDP = adenosylcob(III)alamin 5'-phosphate + GMP + H(+). The protein operates within cofactor biosynthesis; adenosylcobalamin biosynthesis; adenosylcobalamin from cob(II)yrinate a,c-diamide: step 7/7. Its function is as follows. Joins adenosylcobinamide-GDP and alpha-ribazole to generate adenosylcobalamin (Ado-cobalamin). Also synthesizes adenosylcobalamin 5'-phosphate from adenosylcobinamide-GDP and alpha-ribazole 5'-phosphate. This Corynebacterium diphtheriae (strain ATCC 700971 / NCTC 13129 / Biotype gravis) protein is Adenosylcobinamide-GDP ribazoletransferase.